Reading from the N-terminus, the 380-residue chain is Cytochrome b (380 aa).

4 helical membrane-spanning segments follow: residues 34 to 54 (FGSL…LLAM), 78 to 99 (WLIR…YLHI), 114 to 134 (WNTG…GYVL), and 179 to 199 (FFAL…IHLT). Positions 84 and 98 each coordinate heme b. 2 residues coordinate heme b: histidine 183 and histidine 197. Histidine 202 provides a ligand contact to a ubiquinone. Helical transmembrane passes span 227–247 (TKDI…AMFA), 289–309 (LGGV…PFLH), 321–341 (LSQL…WIGS), and 348–368 (FIIT…ILFP).

It belongs to the cytochrome b family. In terms of assembly, the cytochrome bc1 complex contains 11 subunits: 3 respiratory subunits (MT-CYB, CYC1 and UQCRFS1), 2 core proteins (UQCRC1 and UQCRC2) and 6 low-molecular weight proteins (UQCRH/QCR6, UQCRB/QCR7, UQCRQ/QCR8, UQCR10/QCR9, UQCR11/QCR10 and a cleavage product of UQCRFS1). This cytochrome bc1 complex then forms a dimer. Heme b serves as cofactor.

It localises to the mitochondrion inner membrane. Functionally, component of the ubiquinol-cytochrome c reductase complex (complex III or cytochrome b-c1 complex) that is part of the mitochondrial respiratory chain. The b-c1 complex mediates electron transfer from ubiquinol to cytochrome c. Contributes to the generation of a proton gradient across the mitochondrial membrane that is then used for ATP synthesis. The protein is Cytochrome b (MT-CYB) of Aphanotriccus audax (Black-billed flycatcher).